The following is a 95-amino-acid chain: Aspartyl/glutamyl-tRNA(Asn/Gln) amidotransferase subunit C (95 aa).

This sequence belongs to the GatC family. Heterotrimer of A, B and C subunits.

It carries out the reaction L-glutamyl-tRNA(Gln) + L-glutamine + ATP + H2O = L-glutaminyl-tRNA(Gln) + L-glutamate + ADP + phosphate + H(+). The catalysed reaction is L-aspartyl-tRNA(Asn) + L-glutamine + ATP + H2O = L-asparaginyl-tRNA(Asn) + L-glutamate + ADP + phosphate + 2 H(+). Functionally, allows the formation of correctly charged Asn-tRNA(Asn) or Gln-tRNA(Gln) through the transamidation of misacylated Asp-tRNA(Asn) or Glu-tRNA(Gln) in organisms which lack either or both of asparaginyl-tRNA or glutaminyl-tRNA synthetases. The reaction takes place in the presence of glutamine and ATP through an activated phospho-Asp-tRNA(Asn) or phospho-Glu-tRNA(Gln). The protein is Aspartyl/glutamyl-tRNA(Asn/Gln) amidotransferase subunit C of Geotalea daltonii (strain DSM 22248 / JCM 15807 / FRC-32) (Geobacter daltonii).